A 327-amino-acid polypeptide reads, in one-letter code: Acyl-CoA desaturase (327 aa).

Residues 1–39 (MPDREIKSPIWHPEPGTVEDVFDHTYKEKEGPKPPTVIV) are Cytoplasmic-facing. A helical membrane pass occupies residues 40–60 (WRNVILMSLLHLGALYGLFLF). Residue Asn42 coordinates substrate. Residues 61 to 64 (PSAR) are Lumenal-facing. Residues 65-85 (ALTWIWFFGCLLFSALGITAG) traverse the membrane as a helical segment. The Cytoplasmic segment spans residues 86 to 184 (AHRLWSHRSY…DKVVMFQRRF (99 aa)). Residues His87 and His92 each coordinate Fe cation. The Histidine box-1 signature appears at 87 to 92 (HRLWSH). Substrate is bound by residues Asn115, Arg122, and Asp123. Positions 124, 127, and 128 each coordinate Fe cation. The Histidine box-2 signature appears at 124 to 128 (HRVHH). The substrate site is built by Arg155 and Lys156. A helical transmembrane segment spans residues 185–204 (YKPSVLLMCFFVPTFVPWYV). Topologically, residues 205-208 (WGES) are lumenal. A helical membrane pass occupies residues 209–230 (LWVAYFVPALLRYALVLNATWL). Trp229 serves as a coordination point for substrate. Over 231–327 (VNSAAHMWGN…RTGDGSHWSG (97 aa)) the chain is Cytoplasmic. His236, His265, His268, and His269 together coordinate Fe cation. The Histidine box-3 motif lies at 265-269 (HNYHH).

This sequence belongs to the fatty acid desaturase type 1 family. Fe(2+) is required as a cofactor.

The protein resides in the endoplasmic reticulum membrane. It catalyses the reaction octadecanoyl-CoA + 2 Fe(II)-[cytochrome b5] + O2 + 2 H(+) = (9Z)-octadecenoyl-CoA + 2 Fe(III)-[cytochrome b5] + 2 H2O. Its function is as follows. Stearoyl-CoA desaturase that utilizes O(2) and electrons from reduced cytochrome b5 to introduce the first double bond into saturated fatty acyl-CoA substrates. Has high specificity and catalyzes the insertion of a cis double bond at the delta-9 position into fatty acyl-CoA substrates including palmitoyl-CoA and stearoyl-CoA. Contributes to the biosynthesis of membrane phospholipids, cholesterol esters and triglycerides. The chain is Acyl-CoA desaturase from Cyprinus carpio (Common carp).